The chain runs to 1563 residues: Pentafunctional AROM polypeptide (1563 aa).

Positions Met-1 to Asp-382 are 3-dehydroquinate synthase. NAD(+)-binding positions include Asp-48 to Asn-50, Glu-82 to Lys-85, Gly-113 to Val-115, and Asp-118. Arg-129 provides a ligand contact to 7-phospho-2-dehydro-3-deoxy-D-arabino-heptonate. Thr-138–Thr-139 is a binding site for NAD(+). Residues Asp-145 and Lys-151 each contribute to the 7-phospho-2-dehydro-3-deoxy-D-arabino-heptonate site. Lys-160 lines the NAD(+) pocket. Asn-161 serves as a coordination point for 7-phospho-2-dehydro-3-deoxy-D-arabino-heptonate. Residues Phe-178 to Thr-181 and Asn-189 each bind NAD(+). Glu-193 lines the Zn(2+) pocket. 7-phospho-2-dehydro-3-deoxy-D-arabino-heptonate-binding positions include Glu-193–Lys-196 and Lys-248. Glu-258 functions as the Proton acceptor; for 3-dehydroquinate synthase activity in the catalytic mechanism. 7-phospho-2-dehydro-3-deoxy-D-arabino-heptonate contacts are provided by residues Arg-262–Asn-266 and His-269. Zn(2+) is bound at residue His-269. His-273 functions as the Proton acceptor; for 3-dehydroquinate synthase activity in the catalytic mechanism. 7-phospho-2-dehydro-3-deoxy-D-arabino-heptonate is bound by residues His-285 and Lys-354. His-285 is a binding site for Zn(2+). The tract at residues Val-395 to Val-834 is EPSP synthase. Cys-816 acts as the For EPSP synthase activity in catalysis. The interval Pro-857–Ser-1051 is shikimate kinase. Gly-864–Ser-871 is an ATP binding site. The segment at Leu-1052–Glu-1265 is 3-dehydroquinase. The Proton acceptor; for 3-dehydroquinate dehydratase activity role is filled by His-1168. Lys-1196 acts as the Schiff-base intermediate with substrate; for 3-dehydroquinate dehydratase activity in catalysis. Positions Pro-1278–Asn-1563 are shikimate dehydrogenase.

In the N-terminal section; belongs to the sugar phosphate cyclases superfamily. Dehydroquinate synthase family. This sequence in the 2nd section; belongs to the EPSP synthase family. The protein in the 3rd section; belongs to the shikimate kinase family. It in the 4th section; belongs to the type-I 3-dehydroquinase family. In the C-terminal section; belongs to the shikimate dehydrogenase family. As to quaternary structure, homodimer. It depends on Zn(2+) as a cofactor.

It localises to the cytoplasm. It catalyses the reaction 7-phospho-2-dehydro-3-deoxy-D-arabino-heptonate = 3-dehydroquinate + phosphate. The catalysed reaction is 3-dehydroquinate = 3-dehydroshikimate + H2O. The enzyme catalyses shikimate + NADP(+) = 3-dehydroshikimate + NADPH + H(+). It carries out the reaction shikimate + ATP = 3-phosphoshikimate + ADP + H(+). It catalyses the reaction 3-phosphoshikimate + phosphoenolpyruvate = 5-O-(1-carboxyvinyl)-3-phosphoshikimate + phosphate. The protein operates within metabolic intermediate biosynthesis; chorismate biosynthesis; chorismate from D-erythrose 4-phosphate and phosphoenolpyruvate: step 2/7. It participates in metabolic intermediate biosynthesis; chorismate biosynthesis; chorismate from D-erythrose 4-phosphate and phosphoenolpyruvate: step 3/7. It functions in the pathway metabolic intermediate biosynthesis; chorismate biosynthesis; chorismate from D-erythrose 4-phosphate and phosphoenolpyruvate: step 4/7. Its pathway is metabolic intermediate biosynthesis; chorismate biosynthesis; chorismate from D-erythrose 4-phosphate and phosphoenolpyruvate: step 5/7. The protein operates within metabolic intermediate biosynthesis; chorismate biosynthesis; chorismate from D-erythrose 4-phosphate and phosphoenolpyruvate: step 6/7. Functionally, the AROM polypeptide catalyzes 5 consecutive enzymatic reactions in prechorismate polyaromatic amino acid biosynthesis. The chain is Pentafunctional AROM polypeptide from Neurospora crassa (strain ATCC 24698 / 74-OR23-1A / CBS 708.71 / DSM 1257 / FGSC 987).